Here is a 420-residue protein sequence, read N- to C-terminus: Homeobox-containing protein 1 (420 aa).

The HNF-p1 domain maps to 18-49 (DEPRFTIEQIDLLQRLRRTGMTKHEILHALET). The disordered stretch occupies residues 56–139 (EHSDKFGRRS…GKMSPTRYHA (84 aa)). A Glycyl lysine isopeptide (Lys-Gly) (interchain with G-Cter in SUMO2) cross-link involves residue Lys60. 2 stretches are compositionally biased toward low complexity: residues 64 to 73 (RSSYGGSSYG) and 81 to 93 (ASSSTATASTQTQ). Over residues 94–132 (HSGMSPSPSNSYDTSPQPCTTNQNGRENNERLSTSNGKM) the composition is skewed to polar residues. Residue Lys131 forms a Glycyl lysine isopeptide (Lys-Gly) (interchain with G-Cter in SUMO2) linkage. One can recognise a POU-specific atypical domain in the interval 145 to 241 (RSYSFEASEE…PGATLSMRPA (97 aa)). Ser148 carries the post-translational modification Phosphoserine. Residue Lys161 forms a Glycyl lysine isopeptide (Lys-Gly) (interchain with G-Cter in SUMO2) linkage. Ser170 bears the Phosphoserine mark. Residues Lys174, Lys217, and Lys310 each participate in a glycyl lysine isopeptide (Lys-Gly) (interchain with G-Cter in SUMO2) cross-link. A DNA-binding region (homeobox) is located at residues 267–341 (RRGSRFTWRK…NRRKEIKRRA (75 aa)). The disordered stretch occupies residues 353–385 (IDVQSPGGHSNSDDVDGNDYSEQDDSTSHSDHQ). Acidic residues predominate over residues 365 to 377 (DDVDGNDYSEQDD). A Glycyl lysine isopeptide (Lys-Gly) (interchain with G-Cter in SUMO1); alternate cross-link involves residue Lys413. Lys413 participates in a covalent cross-link: Glycyl lysine isopeptide (Lys-Gly) (interchain with G-Cter in SUMO2); alternate.

Associates with the telomerase holoenzyme complex. Interacts with DKC1, XRCC6 and COIL. In terms of tissue distribution, ubiquitous. Detected in pancreas, brain, spleen, placenta, prostate, thymus, liver, heart, bone marrow, skeletal muscle, stomach, uterus, testis, kidney, ovary, colon, lung, cardiac muscle and thyroid gland.

The protein resides in the nucleus. The protein localises to the cytoplasm. It localises to the chromosome. Its subcellular location is the telomere. It is found in the cajal body. The protein resides in the PML body. Its function is as follows. Binds directly to 5'-TTAGGG-3' repeats in telomeric DNA. Associates with the telomerase complex at sites of active telomere processing and positively regulates telomere elongation. Important for TERT binding to chromatin, indicating a role in recruitment of the telomerase complex to telomeres. Also plays a role in the alternative lengthening of telomeres (ALT) pathway in telomerase-negative cells where it promotes formation and/or maintenance of ALT-associated promyelocytic leukemia bodies (APBs). Enhances formation of telomere C-circles in ALT cells, suggesting a possible role in telomere recombination. Might also be involved in the DNA damage response at telomeres. This chain is Homeobox-containing protein 1, found in Homo sapiens (Human).